The chain runs to 460 residues: Proton extrusion protein PxcA (460 aa).

2 disordered regions span residues 82–128 (FSRL…QRRD) and 143–190 (SRYK…GSGN). Residues 90 to 102 (QNGSGPTSAQDKA) are compositionally biased toward polar residues. The segment covering 107 to 120 (AAEANVSESSSENS) has biased composition (low complexity). Polar residues predominate over residues 151–163 (KSQPISASISTSP). Residues 171 to 184 (QPTSTQPSSSNVSV) show a composition bias toward low complexity. 4 helical membrane-spanning segments follow: residues 242–262 (FLLL…NFLF), 337–357 (GLKN…LIFV), 373–393 (IYGL…DVFV), and 420–440 (FIYG…KYWI).

Belongs to the CemA family.

It localises to the cell inner membrane. Its function is as follows. Required for H(+) efflux immediately after light irradiation to form a rapid H(+) concentration gradient across the thylakoid membranes. Together with PxcL, contributes to transient H(+) uptake following dark to light transition. In Synechococcus sp. (strain JA-2-3B'a(2-13)) (Cyanobacteria bacterium Yellowstone B-Prime), this protein is Proton extrusion protein PxcA.